We begin with the raw amino-acid sequence, 567 residues long: DNA-binding protein REPIN1 (567 aa).

The tract at residues 17 to 52 is disordered; that stretch reads PRLLSGPSQESPQTLGKESRGLRQQGTSVAQSGAQA. Residues 22 to 50 are compositionally biased toward polar residues; that stretch reads GPSQESPQTLGKESRGLRQQGTSVAQSGA. At S27 the chain carries Phosphoserine. Residue T30 is modified to Phosphothreonine. K33 bears the N6-acetyllysine mark. The C2H2-type 1; atypical zinc-finger motif lies at 57–79; that stretch reads HRCAHCRRHFPGWVALWLHTRRC. 7 consecutive C2H2-type zinc fingers follow at residues 85 to 107, 116 to 138, 145 to 168, 177 to 199, 236 to 258, 264 to 286, and 292 to 314; these read LPCP…RQVH, FACH…LRAH, IACP…RRCH, FICG…KRVH, FQCA…RRVH, HQCP…RRIH, and YPCK…SKIH. The residue at position 276 (K276) is an N6-acetyllysine. Residues 305 to 315 are compositionally biased toward basic residues; it reads PNLLSHSKIHK. A disordered region spans residues 305–372; sequence PNLLSHSKIH…HPQDPIEAPP (68 aa). Residues 345 to 362 are compositionally biased toward pro residues; it reads PAVPLKPAQEPPPGAPPE. C2H2-type zinc fingers lie at residues 375 to 397, 403 to 425, 431 to 453, 459 to 481, 487 to 509, 515 to 537, and 543 to 565; these read YSCD…QRQH, FTCA…SRVH, FACE…RRDH, FVCP…RRIH, YVCP…RRIH, YACP…RKSH, and FCCA…QKKH.

Homodimers and homomultimers. Found in a complex with RIP60 and RIP100. As to expression, expressed in adipose tissue and bone tissue.

It is found in the nucleus. The protein localises to the cytoplasm. It localises to the cytosol. Its function is as follows. Sequence-specific double-stranded DNA-binding protein. Binds ATT-rich and T-rich DNA sequences and facilitates DNA bending. May regulate the expression of genes involved in cellular fatty acid import, including SCARB1/CD36, and genes involved in lipid droplet formation. May regulate the expression of LCN2, and thereby influence iron metabolism and apoptosis-related pathways. May regulate the expression of genes involved in glucose transport. This Homo sapiens (Human) protein is DNA-binding protein REPIN1 (REPIN1).